Reading from the N-terminus, the 246-residue chain is Ribulose-phosphate 3-epimerase (246 aa).

Substrate is bound at residue Ser-9. Residues His-34, Asp-36, and His-83 each coordinate a divalent metal cation. Residue Asp-36 is the Proton acceptor of the active site. Residues His-83, 159–162, 188–190, and 210–212 contribute to the substrate site; these read GFGG, DGG, and GTS. A divalent metal cation is bound at residue Asp-188. Catalysis depends on Asp-188, which acts as the Proton donor.

Belongs to the ribulose-phosphate 3-epimerase family. It depends on Co(2+) as a cofactor. The cofactor is Fe(2+). Mn(2+) serves as cofactor. Requires Zn(2+) as cofactor.

The catalysed reaction is D-ribulose 5-phosphate = D-xylulose 5-phosphate. It participates in carbohydrate degradation; pentose phosphate pathway; D-xylulose 5-phosphate from D-ribulose 5-phosphate (non-oxidative stage): step 1/1. In terms of biological role, catalyzes the reversible epimerization of D-ribulose 5-phosphate to D-xylulose 5-phosphate. The polypeptide is Ribulose-phosphate 3-epimerase (RPE1) (Candida glabrata (strain ATCC 2001 / BCRC 20586 / JCM 3761 / NBRC 0622 / NRRL Y-65 / CBS 138) (Yeast)).